The primary structure comprises 100 residues: A-type ATP synthase subunit F (100 aa).

The protein belongs to the V-ATPase F subunit family. As to quaternary structure, has multiple subunits with at least A(3), B(3), C, D, E, F, H, I and proteolipid K(x).

The protein resides in the cell membrane. Component of the A-type ATP synthase that produces ATP from ADP in the presence of a proton gradient across the membrane. The sequence is that of A-type ATP synthase subunit F from Methanospirillum hungatei JF-1 (strain ATCC 27890 / DSM 864 / NBRC 100397 / JF-1).